A 472-amino-acid chain; its full sequence is Methylenetetrahydrofolate--tRNA-(uracil-5-)-methyltransferase TrmFO (472 aa).

15 to 20 (GGGLAG) is an FAD binding site.

It belongs to the MnmG family. TrmFO subfamily. The cofactor is FAD.

The protein resides in the cytoplasm. The catalysed reaction is uridine(54) in tRNA + (6R)-5,10-methylene-5,6,7,8-tetrahydrofolate + NADH + H(+) = 5-methyluridine(54) in tRNA + (6S)-5,6,7,8-tetrahydrofolate + NAD(+). It carries out the reaction uridine(54) in tRNA + (6R)-5,10-methylene-5,6,7,8-tetrahydrofolate + NADPH + H(+) = 5-methyluridine(54) in tRNA + (6S)-5,6,7,8-tetrahydrofolate + NADP(+). In terms of biological role, catalyzes the folate-dependent formation of 5-methyl-uridine at position 54 (M-5-U54) in all tRNAs. In Rhizobium meliloti (strain 1021) (Ensifer meliloti), this protein is Methylenetetrahydrofolate--tRNA-(uracil-5-)-methyltransferase TrmFO.